The chain runs to 282 residues: Pantothenate synthetase (282 aa).

30-37 contacts ATP; it reads MGYLHEGH. H37 (proton donor) is an active-site residue. A (R)-pantoate-binding site is contributed by Q61. Position 61 (Q61) interacts with beta-alanine. 147-150 provides a ligand contact to ATP; sequence GMKD. Q153 is a (R)-pantoate binding site. ATP is bound by residues V176 and 184–187; that span reads KSSR.

The protein belongs to the pantothenate synthetase family. Homodimer.

The protein resides in the cytoplasm. The enzyme catalyses (R)-pantoate + beta-alanine + ATP = (R)-pantothenate + AMP + diphosphate + H(+). It participates in cofactor biosynthesis; (R)-pantothenate biosynthesis; (R)-pantothenate from (R)-pantoate and beta-alanine: step 1/1. Catalyzes the condensation of pantoate with beta-alanine in an ATP-dependent reaction via a pantoyl-adenylate intermediate. This Bacillus anthracis (strain A0248) protein is Pantothenate synthetase.